Reading from the N-terminus, the 29-residue chain is Cycloviolacin-O21 (29 aa).

A cross-link (cyclopeptide (Gly-Asn)) is located at residues 1 to 29 (GLPVCGETCVTGSCYTPGCTCSWPVCTRN). Cystine bridges form between Cys-5-Cys-19, Cys-9-Cys-21, and Cys-14-Cys-26.

Post-translationally, this is a cyclic peptide. In terms of tissue distribution, expressed in leaves, petals, petioles, and runners but not in roots (at protein level).

In terms of biological role, probably participates in a plant defense mechanism. The chain is Cycloviolacin-O21 from Viola odorata (Sweet violet).